The primary structure comprises 496 residues: MSNTKIRVRFCPSPTGTPHVGLIRTALFNWAYARHCGGDFVFRIEDTDAGRDSEESYLAILDALRWLGLDWDEGPEVGGPYEPYRQSQRKELHREVVRKLLEAGEAYEAFSTAEEVEARHLAAGRNPKLGYDNYDRDLTEEQRAAFRAEGRDPVVRLRMPDHDITWNDLVRGETTFAAGVVPDFALTRGNGDPLYTLVNPVDDALMKITHVLRGEDLLPSTPRQIALYEAMIRIGVTDSIPAFAHLPSVLGEGTKKLSKRDPQSNLFLHRDRGFIPEGLLNYLALLGWSIADDHDIFSLAEMVTAFDVTDVNSNPARFDQKKADAINAEHIRLLAPEEFVTRLRTYFAAHGHELGLDESAFAVAADLVQTRIVVLGDAWGLLKFLNDDAYAIDPGAARKELGEASLPVLDAAIGALESLEAWTTPAIEGALKSALIEGLELKPRKAFGPLRVAVTGATVSPPLFESMELLGSGRTLTRLRNARSWENGVGDQTDSG.

The short motif at 12–22 (PSPTGTPHVGL) is the 'HIGH' region element. The 'KMSKS' region signature appears at 256–260 (KLSKR). Lys259 contributes to the ATP binding site.

Belongs to the class-I aminoacyl-tRNA synthetase family. Glutamate--tRNA ligase type 1 subfamily. In terms of assembly, monomer.

Its subcellular location is the cytoplasm. The enzyme catalyses tRNA(Glu) + L-glutamate + ATP = L-glutamyl-tRNA(Glu) + AMP + diphosphate. In terms of biological role, catalyzes the attachment of glutamate to tRNA(Glu) in a two-step reaction: glutamate is first activated by ATP to form Glu-AMP and then transferred to the acceptor end of tRNA(Glu). The protein is Glutamate--tRNA ligase of Mycobacteroides abscessus (strain ATCC 19977 / DSM 44196 / CCUG 20993 / CIP 104536 / JCM 13569 / NCTC 13031 / TMC 1543 / L948) (Mycobacterium abscessus).